The primary structure comprises 360 residues: Phospho-N-acetylmuramoyl-pentapeptide-transferase (360 aa).

The Periplasmic segment spans residues 1-25 (MLVWLAEHLVKYYSGFNVFSYLTFR). Residues 26-46 (AIVSLLTALFISLWMGPRMIA) traverse the membrane as a helical segment. The Cytoplasmic segment spans residues 47-71 (RLQKLSFGQVVRNDGPESHFSKRGT). The chain crosses the membrane as a helical span at residues 72–92 (PTMGGIMILTSIVISVLLWAY). A topological domain (periplasmic) is located at residue Pro93. A helical transmembrane segment spans residues 94 to 114 (SNPYVWCVLVVLIGYGIIGFV). The Cytoplasmic segment spans residues 115 to 131 (DDYRKVVRKDTKGLIAR). Residues 132–152 (WKYFWMSVIALGVAFALYLVG) form a helical membrane-spanning segment. The Periplasmic segment spans residues 153–167 (KDTPATQLVVPFFKD). The helical transmembrane segment at 168 to 188 (VMPQLGLFYILLSYFVIVGTG) threads the bilayer. At 189–198 (NAVNLTDGLD) the chain is on the cytoplasmic side. A helical membrane pass occupies residues 199–219 (GLAIMPTVFVAAGFALVAWAT). At 220–235 (GNMNFANYLHIPYLRH) the chain is on the periplasmic side. A helical transmembrane segment spans residues 236–256 (AGELVIVCTAIVGAGLGFLWF). Over 257–262 (NTYPAQ) the chain is Cytoplasmic. A helical transmembrane segment spans residues 263–283 (VFMGDVGSLALGGALGIIAVL). Over 284 to 287 (LRQE) the chain is Periplasmic. The helical transmembrane segment at 288-308 (FLLVIMGGVFVVETLSVILQV) threads the bilayer. Over 309–337 (GSFKLRGQRIFRMAPIHHHYELKGWPEPR) the chain is Cytoplasmic. Residues 338–358 (VIVRFWIISLMLVLIGLATLK) form a helical membrane-spanning segment. Residues 359–360 (VR) are Periplasmic-facing.

The protein belongs to the glycosyltransferase 4 family. MraY subfamily. Mg(2+) is required as a cofactor.

It is found in the cell inner membrane. It carries out the reaction UDP-N-acetyl-alpha-D-muramoyl-L-alanyl-gamma-D-glutamyl-meso-2,6-diaminopimeloyl-D-alanyl-D-alanine + di-trans,octa-cis-undecaprenyl phosphate = di-trans,octa-cis-undecaprenyl diphospho-N-acetyl-alpha-D-muramoyl-L-alanyl-D-glutamyl-meso-2,6-diaminopimeloyl-D-alanyl-D-alanine + UMP. The protein operates within cell wall biogenesis; peptidoglycan biosynthesis. Catalyzes the initial step of the lipid cycle reactions in the biosynthesis of the cell wall peptidoglycan: transfers peptidoglycan precursor phospho-MurNAc-pentapeptide from UDP-MurNAc-pentapeptide onto the lipid carrier undecaprenyl phosphate, yielding undecaprenyl-pyrophosphoryl-MurNAc-pentapeptide, known as lipid I. The sequence is that of Phospho-N-acetylmuramoyl-pentapeptide-transferase from Salmonella gallinarum (strain 287/91 / NCTC 13346).